Reading from the N-terminus, the 310-residue chain is Lipoyl synthase (310 aa).

[4Fe-4S] cluster-binding residues include Cys-61, Cys-66, Cys-72, Cys-87, Cys-91, Cys-94, and Ser-300. One can recognise a Radical SAM core domain in the interval 73-289; that stretch reads FNNGTATFMI…EYIALSLGFS (217 aa).

The protein belongs to the radical SAM superfamily. Lipoyl synthase family. The cofactor is [4Fe-4S] cluster.

The protein localises to the cytoplasm. The enzyme catalyses [[Fe-S] cluster scaffold protein carrying a second [4Fe-4S](2+) cluster] + N(6)-octanoyl-L-lysyl-[protein] + 2 oxidized [2Fe-2S]-[ferredoxin] + 2 S-adenosyl-L-methionine + 4 H(+) = [[Fe-S] cluster scaffold protein] + N(6)-[(R)-dihydrolipoyl]-L-lysyl-[protein] + 4 Fe(3+) + 2 hydrogen sulfide + 2 5'-deoxyadenosine + 2 L-methionine + 2 reduced [2Fe-2S]-[ferredoxin]. It functions in the pathway protein modification; protein lipoylation via endogenous pathway; protein N(6)-(lipoyl)lysine from octanoyl-[acyl-carrier-protein]: step 2/2. Its function is as follows. Catalyzes the radical-mediated insertion of two sulfur atoms into the C-6 and C-8 positions of the octanoyl moiety bound to the lipoyl domains of lipoate-dependent enzymes, thereby converting the octanoylated domains into lipoylated derivatives. The sequence is that of Lipoyl synthase from Buchnera aphidicola subsp. Cinara cedri (strain Cc).